The chain runs to 311 residues: Olfactory receptor 8H1 (311 aa).

The Extracellular segment spans residues 1–25 (MGRRNNTNVPDFILTGLSDSEEVQM). N-linked (GlcNAc...) asparagine glycosylation is present at Asn-5. The chain crosses the membrane as a helical span at residues 26–46 (ALFILFLLIYLITMLGNVGMI). At 47–54 (LIIRLDLQ) the chain is on the cytoplasmic side. Residues 55–75 (LHTPMYFFLTHLSFIDLSYST) traverse the membrane as a helical segment. Residues 76–98 (VITPKTLANLLTSNYISFMGCFA) lie on the Extracellular side of the membrane. Cys-96 and Cys-188 are disulfide-bonded. A helical transmembrane segment spans residues 99-119 (QMFFFVFLGAAECFLLSSMAY). At 120–138 (DRYVAICSPLRYPVIMSKR) the chain is on the cytoplasmic side. The helical transmembrane segment at 139–159 (LCCALVTGPYVISFINSFVNV) threads the bilayer. The Extracellular segment spans residues 160–196 (VWMSRLHFCDSNVVRHFFCDTSPILALSCMDTYDIEI). The chain crosses the membrane as a helical span at residues 197 to 216 (MIHILAGSTLMVSLITISAS). The Cytoplasmic segment spans residues 217 to 236 (YVSILSTILKINSTSGKQKA). A helical transmembrane segment spans residues 237–257 (LSTCASHLLGVTIFYGTMIFT). At 258–270 (YLKPRKSYSLGRD) the chain is on the extracellular side. Residues 271–291 (QVASVFYTIVIPMLNPLIYSL) traverse the membrane as a helical segment. The Cytoplasmic portion of the chain corresponds to 292-311 (RNKEVKNALIRVMQRRQDSR).

The protein belongs to the G-protein coupled receptor 1 family.

The protein resides in the cell membrane. Functionally, odorant receptor. This is Olfactory receptor 8H1 (OR8H1) from Homo sapiens (Human).